A 289-amino-acid polypeptide reads, in one-letter code: 3-methyl-2-oxobutanoate hydroxymethyltransferase (289 aa).

A compositionally biased stretch (low complexity) spans 1 to 10; that stretch reads MSDSKSSAST. A disordered region spans residues 1–33; it reads MSDSKSSASTSEDRLYGSAPSHDVPKRKTRTHH. Asp-70 and Asp-109 together coordinate Mg(2+). 3-methyl-2-oxobutanoate is bound by residues 70–71, Asp-109, and Lys-139; that span reads DS. Residue Glu-141 participates in Mg(2+) binding. The active-site Proton acceptor is Glu-207.

Belongs to the PanB family. Homodecamer; pentamer of dimers. The cofactor is Mg(2+).

The protein localises to the cytoplasm. The catalysed reaction is 3-methyl-2-oxobutanoate + (6R)-5,10-methylene-5,6,7,8-tetrahydrofolate + H2O = 2-dehydropantoate + (6S)-5,6,7,8-tetrahydrofolate. It functions in the pathway cofactor biosynthesis; (R)-pantothenate biosynthesis; (R)-pantoate from 3-methyl-2-oxobutanoate: step 1/2. Functionally, catalyzes the reversible reaction in which hydroxymethyl group from 5,10-methylenetetrahydrofolate is transferred onto alpha-ketoisovalerate to form ketopantoate. In Rhodococcus jostii (strain RHA1), this protein is 3-methyl-2-oxobutanoate hydroxymethyltransferase.